Reading from the N-terminus, the 1009-residue chain is Protein-tyrosine kinase 2-beta (1009 aa).

The FERM domain occupies 39–359 (RILKVCFYSN…GYCRLQGEHQ (321 aa)). Phosphoserine occurs at positions 361, 375, and 399. At Tyr402 the chain carries Phosphotyrosine; by autocatalysis. Residues 425 to 683 (VVLNRILGEG…ELVCSLSDVY (259 aa)) enclose the Protein kinase domain. ATP-binding positions include 431–439 (LGEGFFGEV), Lys457, and 503–509 (ELYPYGE). The active-site Proton acceptor is the Asp549. Phosphotyrosine is present on Tyr579. At Tyr580 the chain carries Phosphotyrosine; by SRC, FYN and LCK. Residues 701 to 725 (TPKILEPTAFQEPPPKPSRPKYRPP) are disordered. Residues 712 to 725 (EPPPKPSRPKYRPP) are compositionally biased toward pro residues. A Phosphotyrosine modification is found at Tyr722. At Ser762 the chain carries Phosphoserine. The residue at position 765 (Thr765) is a Phosphothreonine. Residues 801 to 1009 (KVKMRQILDK…LANLAHPPAE (209 aa)) form an interaction with TGFB1I1 region. Phosphotyrosine occurs at positions 819 and 834. Ser839 is subject to Phosphoserine. Thr842 is subject to Phosphothreonine. Tyr849 carries the phosphotyrosine modification. Position 866 is a phosphoserine (Ser866). The focal adhesion targeting (FAT) stretch occupies residues 868–1009 (QPTANLDRTD…LANLAHPPAE (142 aa)). Tyr881 is modified (phosphotyrosine; by SRC).

It belongs to the protein kinase superfamily. Tyr protein kinase family. FAK subfamily. Homodimer, or homooligomer. Interacts with SIRPA and SH2D3C. Interacts with ARHGAP10. Interacts with DLG4. Interacts with KCNA2. Interacts with NPHP1, ASAP1, ASAP2, ARHGAP26, SKAP2 and TGFB1I1. The Tyr-402 phosphorylated form interacts with SRC (via SH2 domain) and SRC family members. Forms a signaling complex with EPHA1, LCK and phosphatidylinositol 3-kinase; upon activation by EFNA1. Interacts with GRB2 (via SH2 domain). Interacts with P53/TP53 and MDM2. Interacts with MYLK. Interacts with BCAR1. Interacts with PDPK1. Interacts (hypophosphorylated) with PXN. Interacts with RB1CC1. Interacts with RHOU. Interacts with VAV1. Interacts with LPXN and PTPN12. Post-translationally, phosphorylated on tyrosine residues in response to various stimuli that elevate the intracellular calcium concentration; this activation is indirect and may be mediated by production of reactive oxygen species (ROS). Tyr-402 is the major autophosphorylation site, but other kinases can also phosphorylate Tyr-402. Autophosphorylation occurs in trans, i.e. one subunit of the dimeric receptor phosphorylates tyrosine residues on the other subunit. Phosphorylation at Tyr-402 promotes interaction with SRC and SRC family members, leading to phosphorylation at Tyr-579; Tyr-580 and Tyr-881. Phosphorylation at Tyr-881 is important for interaction with GRB2. Phosphorylated on tyrosine residues upon activation of FGR and PKC. Recruitment by NPHP1 to cell matrix adhesions initiates Tyr-402 phosphorylation. In monocytes, adherence to substrata is required for tyrosine phosphorylation and kinase activation. Angiotensin II, thapsigargin and L-alpha-lysophosphatidic acid (LPA) also induce autophosphorylation and increase kinase activity. Phosphorylation by MYLK promotes ITGB2 activation and is thus essential to trigger neutrophil transmigration during lung injury. Dephosphorylated by PTPN12. As to expression, most abundant in the brain, with highest levels in amygdala and hippocampus. Low levels in kidney (at protein level). Also expressed in spleen and lymphocytes.

The protein resides in the cytoplasm. The protein localises to the perinuclear region. Its subcellular location is the cell membrane. It localises to the cell junction. It is found in the focal adhesion. The protein resides in the cell projection. The protein localises to the lamellipodium. Its subcellular location is the cell cortex. It localises to the nucleus. The catalysed reaction is L-tyrosyl-[protein] + ATP = O-phospho-L-tyrosyl-[protein] + ADP + H(+). Its activity is regulated as follows. Activated in response to stimuli that lead to increased intracellular Ca(2+) levels; this activation is indirect and may be mediated by calcium-mediated production of reactive oxygen species (ROS). Activated by autophosphorylation at Tyr-402; this creates a binding site for SRC family kinases and leads to phosphorylation at additional tyrosine residues. Phosphorylation at Tyr-402, Tyr-579 and Tyr-580 is required for optimal kinase activity. Inhibited by PF-562,271, BIRB796, PF-4618433 and by PF-431396, PF-2318841 and their derivatives. Inhibited by sulfoximine-substituted trifluoromethylpyrimidines. Inhibited by 4-amino and 5-aryl substituted pyridinone compounds. Functionally, non-receptor protein-tyrosine kinase that regulates reorganization of the actin cytoskeleton, cell polarization, cell migration, adhesion, spreading and bone remodeling. Plays a role in the regulation of the humoral immune response, and is required for normal levels of marginal B-cells in the spleen and normal migration of splenic B-cells. Required for normal macrophage polarization and migration towards sites of inflammation. Regulates cytoskeleton rearrangement and cell spreading in T-cells, and contributes to the regulation of T-cell responses. Promotes osteoclastic bone resorption; this requires both PTK2B/PYK2 and SRC. May inhibit differentiation and activity of osteoprogenitor cells. Functions in signaling downstream of integrin and collagen receptors, immune receptors, G-protein coupled receptors (GPCR), cytokine, chemokine and growth factor receptors, and mediates responses to cellular stress. Forms multisubunit signaling complexes with SRC and SRC family members upon activation; this leads to the phosphorylation of additional tyrosine residues, creating binding sites for scaffold proteins, effectors and substrates. Regulates numerous signaling pathways. Promotes activation of phosphatidylinositol 3-kinase and of the AKT1 signaling cascade. Promotes activation of NOS3. Regulates production of the cellular messenger cGMP. Promotes activation of the MAP kinase signaling cascade, including activation of MAPK1/ERK2, MAPK3/ERK1 and MAPK8/JNK1. Promotes activation of Rho family GTPases, such as RHOA and RAC1. Recruits the ubiquitin ligase MDM2 to P53/TP53 in the nucleus, and thereby regulates P53/TP53 activity, P53/TP53 ubiquitination and proteasomal degradation. Acts as a scaffold, binding to both PDPK1 and SRC, thereby allowing SRC to phosphorylate PDPK1 at 'Tyr-9, 'Tyr-373', and 'Tyr-376'. Promotes phosphorylation of NMDA receptors by SRC family members, and thereby contributes to the regulation of NMDA receptor ion channel activity and intracellular Ca(2+) levels. May also regulate potassium ion transport by phosphorylation of potassium channel subunits. Phosphorylates SRC; this increases SRC kinase activity. Phosphorylates ASAP1, NPHP1, KCNA2 and SHC1. Promotes phosphorylation of ASAP2, RHOU and PXN; this requires both SRC and PTK2/PYK2. The protein is Protein-tyrosine kinase 2-beta (PTK2B) of Homo sapiens (Human).